The following is a 386-amino-acid chain: Lipoyl synthase, mitochondrial (386 aa).

Positions 115, 120, 126, 146, 150, 153, and 362 each coordinate [4Fe-4S] cluster. Positions 131–351 constitute a Radical SAM core domain; the sequence is ETGTATATIM…QKLGMEMGFR (221 aa).

The protein belongs to the radical SAM superfamily. Lipoyl synthase family. [4Fe-4S] cluster serves as cofactor.

It is found in the mitochondrion. The catalysed reaction is [[Fe-S] cluster scaffold protein carrying a second [4Fe-4S](2+) cluster] + N(6)-octanoyl-L-lysyl-[protein] + 2 oxidized [2Fe-2S]-[ferredoxin] + 2 S-adenosyl-L-methionine + 4 H(+) = [[Fe-S] cluster scaffold protein] + N(6)-[(R)-dihydrolipoyl]-L-lysyl-[protein] + 4 Fe(3+) + 2 hydrogen sulfide + 2 5'-deoxyadenosine + 2 L-methionine + 2 reduced [2Fe-2S]-[ferredoxin]. Its pathway is protein modification; protein lipoylation via endogenous pathway; protein N(6)-(lipoyl)lysine from octanoyl-[acyl-carrier-protein]: step 2/2. In terms of biological role, catalyzes the radical-mediated insertion of two sulfur atoms into the C-6 and C-8 positions of the octanoyl moiety bound to the lipoyl domains of lipoate-dependent enzymes, thereby converting the octanoylated domains into lipoylated derivatives. The polypeptide is Lipoyl synthase, mitochondrial (Picea sitchensis (Sitka spruce)).